Reading from the N-terminus, the 587-residue chain is Glutamine--tRNA ligase (587 aa).

A 'HIGH' region motif is present at residues 58–68 (PEPNGYLHIGH). ATP contacts are provided by residues 59 to 61 (EPN) and 65 to 71 (HIGHAKS). The L-glutamine site is built by Asp-91 and Tyr-240. ATP-binding positions include Thr-259 and 294-295 (RL). A 'KMSKS' region motif is present at residues 301–305 (VTSKR).

It belongs to the class-I aminoacyl-tRNA synthetase family. In terms of assembly, monomer.

It localises to the cytoplasm. The catalysed reaction is tRNA(Gln) + L-glutamine + ATP = L-glutaminyl-tRNA(Gln) + AMP + diphosphate. This Bordetella pertussis (strain Tohama I / ATCC BAA-589 / NCTC 13251) protein is Glutamine--tRNA ligase.